Here is a 155-residue protein sequence, read N- to C-terminus: MEGVLLFWKYRALFFLVLCSLVLCKVHLSQASPTSQQHNDAASLSKIYPRGSHWAVGHLMGKKSIEEYPYAYDEADRSSAAVFSEGDKPSDGYQQWKESLLNLLKMIEVNEYRNSKAMREASVYNKKFSGAEDNNLKEMLDYLYQMMNMKENTSS.

Residues 1 to 31 (MEGVLLFWKYRALFFLVLCSLVLCKVHLSQA) form the signal peptide. Met-60 is modified (methionine amide). A propeptide spanning residues 128-155 (FSGAEDNNLKEMLDYLYQMMNMKENTSS) is cleaved from the precursor.

Belongs to the bombesin/neuromedin-B/ranatensin family. Brain and stomach. In the stomach GRP was localized, at the base of the gastric pits, to occasional cells whose distribution and appearance were consistent with that of gut neuroendocrine cells.

It localises to the secreted. The protein resides in the cytoplasmic vesicle. Its subcellular location is the secretory vesicle lumen. Stimulates the release of gastrin and other gastrointestinal hormones. The chain is Gastrin-releasing peptide (grp) from Bombina orientalis (Oriental fire-bellied toad).